Here is a 269-residue protein sequence, read N- to C-terminus: Peptide deformylase 1B, chloroplastic (269 aa).

The N-terminal 51 residues, 1–51 (MAARLHLRLGPRLRGFASSFAPLLAAHPRALPLSRMGSVAPLAAARARRGF), are a transit peptide targeting the chloroplast. Fe cation is bound by residues Cys-168 and His-210. Glu-211 is a catalytic residue. His-214 provides a ligand contact to Fe cation.

This sequence belongs to the polypeptide deformylase family. Homodimer. Fe(2+) serves as cofactor. Mainly expressed in mature leaves and sheaths.

The protein localises to the plastid. It is found in the chloroplast stroma. The protein resides in the mitochondrion. The catalysed reaction is N-terminal N-formyl-L-methionyl-[peptide] + H2O = N-terminal L-methionyl-[peptide] + formate. Inhibited by actinonin. Functionally, removes the formyl group from the N-terminal Met of newly synthesized proteins. This is Peptide deformylase 1B, chloroplastic (PDF1B) from Oryza sativa subsp. japonica (Rice).